The following is a 221-amino-acid chain: Interleukin-12 subunit alpha (221 aa).

The first 25 residues, methionine 1–glycine 25, serve as a signal peptide directing secretion. Cystine bridges form between cysteine 39–cysteine 112, cysteine 66–cysteine 198, and cysteine 87–cysteine 125. N-linked (GlcNAc...) asparagine glycosylation is present at asparagine 95.

The protein belongs to the IL-6 superfamily. As to quaternary structure, heterodimer with IL12B; disulfide-linked. This heterodimer is known as interleukin IL-12. Heterodimer with EBI3/IL27B; not disulfide-linked. This heterodimer is known as interleukin IL-35. Interacts with NBR1; this interaction promotes IL-12 secretion.

Its subcellular location is the secreted. Its function is as follows. Heterodimerizes with IL12B to form the IL-12 cytokine or with EBI3/IL27B to form the IL-35 cytokine. IL-12 is primarily produced by professional antigen-presenting cells (APCs) such as B-cells and dendritic cells (DCs) as well as macrophages and granulocytes and regulates T-cell and natural killer-cell responses, induces the production of interferon-gamma (IFN-gamma), favors the differentiation of T-helper 1 (Th1) cells and is an important link between innate resistance and adaptive immunity. Mechanistically, exerts its biological effects through a receptor composed of IL12R1 and IL12R2 subunits. Binding to the receptor results in the rapid tyrosine phosphorylation of a number of cellular substrates including the JAK family kinases TYK2 and JAK2. In turn, recruited STAT4 gets phosphorylated and translocates to the nucleus where it regulates cytokine/growth factor responsive genes. As part of IL-35, plays essential roles in maintaining the immune homeostasis of the liver microenvironment and also functions as an immune-suppressive cytokine. Mediates biological events through unconventional receptors composed of IL12RB2 and gp130/IL6ST heterodimers or homodimers. Signaling requires the transcription factors STAT1 and STAT4, which form a unique heterodimer that binds to distinct DNA sites. The protein is Interleukin-12 subunit alpha (IL12A) of Ovis aries (Sheep).